We begin with the raw amino-acid sequence, 646 residues long: MAEKAGEAGVQTRSRRNRSTSREVSNGVAAPPAKATRSSQLEAVAEQATPSSQQSQKSVRTESSMSLGFNGGSSQGSRATSPTSFSRAQEKEELQNLNDRLAKILNKLNDSEEENRTLKIRLTTVQQETSADLNDQIGKYRDELERARKAVDAITQEKDRELLAKDKALGELNEHKAQFAALRKRLDELEARLKAAEKAARDKDNVLTELKAQLAESETAGKRIQKELADKTKQLDQARNQIEQEVISRTNLENALKTAEEKAKFENNLLESKLQRQSLSVTTVDHHSAQSTSRRSGSDFSASVEDMRSALEDAREEIQENMDRMYGSKLEGLEVLSESQKQTINGLNQALTASRHDMKDLQKENQQLRKKVGEVEKELHQQHQKFDQHKMDCTARIAALSDQSNQASQQYQALLEEYRTTTHNNVEMRTELEMYNKLLSDEEIRLGITSADQYGGVRHGAKKRKLTETFYTTPFGSRSSAGSRSAGHNSTPVTKSQVTRTTVKTSENKSKASGPVRILEVAPGKVVRLENISEAVMQLGHWRIHQHGASGDAAFQFEKDQVIGGQSIISVYSSTEDSQPNNGVTEIIATNAWLADSHLETVLSDGDGNQMATYEVSADSNLDIHNDSVRDSPRSAGKGILGFFGL.

Residues 1–85 form a head region; the sequence is MAEKAGEAGV…GSRATSPTSF (85 aa). Residues 1 to 94 are disordered; sequence MAEKAGEAGV…FSRAQEKEEL (94 aa). Composition is skewed to polar residues over residues 48 to 67 and 75 to 87; these read ATPS…SMSL and QGSR…SFSR. A coil 1A region spans residues 86–126; that stretch reads SRAQEKEELQNLNDRLAKILNKLNDSEEENRTLKIRLTTVQ. The region spanning 90–446 is the IF rod domain; the sequence is EKEELQNLND…KLLSDEEIRL (357 aa). Residues 127–137 form a linker 1 region; that stretch reads QETSADLNDQI. The tract at residues 138-281 is coil 1B; it reads GKYRDELERA…SKLQRQSLSV (144 aa). The span at 281-301 shows a compositional bias: polar residues; that stretch reads VTTVDHHSAQSTSRRSGSDFS. The segment at 281 to 304 is disordered; sequence VTTVDHHSAQSTSRRSGSDFSASV. Residues 282–299 form a linker 2 region; the sequence is TTVDHHSAQSTSRRSGSD. The interval 300-439 is coil 2; it reads FSASVEDMRS…TELEMYNKLL (140 aa). Residues 440 to 646 form a tail region; the sequence is SDEEIRLGIT…GKGILGFFGL (207 aa). The Nuclear localization signal motif lies at 457 to 471; it reads VRHGAKKRKLTETFY. Low complexity predominate over residues 476 to 487; it reads GSRSSAGSRSAG. The interval 476 to 513 is disordered; the sequence is GSRSSAGSRSAGHNSTPVTKSQVTRTTVKTSENKSKAS. The segment covering 488-505 has biased composition (polar residues); it reads HNSTPVTKSQVTRTTVKT. One can recognise an LTD domain in the interval 504–618; the sequence is KTSENKSKAS…NQMATYEVSA (115 aa).

Belongs to the intermediate filament family.

It is found in the nucleus. In terms of biological role, intermediate filament (IF) protein, component of the nuclear lamina, a fibrous layer on the nucleoplasmic side of the inner nuclear membrane, which is thought to provide a framework for the nuclear envelope. In Hypsibius exemplaris (Freshwater tardigrade), this protein is Lamin-1.